Reading from the N-terminus, the 170-residue chain is Adenine phosphoribosyltransferase (170 aa).

This sequence belongs to the purine/pyrimidine phosphoribosyltransferase family. As to quaternary structure, homodimer.

The protein localises to the cytoplasm. It carries out the reaction AMP + diphosphate = 5-phospho-alpha-D-ribose 1-diphosphate + adenine. It participates in purine metabolism; AMP biosynthesis via salvage pathway; AMP from adenine: step 1/1. Catalyzes a salvage reaction resulting in the formation of AMP, that is energically less costly than de novo synthesis. The polypeptide is Adenine phosphoribosyltransferase (Thermosynechococcus vestitus (strain NIES-2133 / IAM M-273 / BP-1)).